The following is a 529-amino-acid chain: Bifunctional purine biosynthesis protein PurH (529 aa).

The MGS-like domain occupies 1–148 (MQQRRPVRRA…KNHKDVAIVV (148 aa)).

The protein belongs to the PurH family.

The enzyme catalyses (6R)-10-formyltetrahydrofolate + 5-amino-1-(5-phospho-beta-D-ribosyl)imidazole-4-carboxamide = 5-formamido-1-(5-phospho-D-ribosyl)imidazole-4-carboxamide + (6S)-5,6,7,8-tetrahydrofolate. The catalysed reaction is IMP + H2O = 5-formamido-1-(5-phospho-D-ribosyl)imidazole-4-carboxamide. It participates in purine metabolism; IMP biosynthesis via de novo pathway; 5-formamido-1-(5-phospho-D-ribosyl)imidazole-4-carboxamide from 5-amino-1-(5-phospho-D-ribosyl)imidazole-4-carboxamide (10-formyl THF route): step 1/1. Its pathway is purine metabolism; IMP biosynthesis via de novo pathway; IMP from 5-formamido-1-(5-phospho-D-ribosyl)imidazole-4-carboxamide: step 1/1. This chain is Bifunctional purine biosynthesis protein PurH, found in Salmonella newport (strain SL254).